We begin with the raw amino-acid sequence, 118 residues long: Holo-[acyl-carrier-protein] synthase (118 aa).

Mg(2+)-binding residues include aspartate 8 and glutamate 58.

Belongs to the P-Pant transferase superfamily. AcpS family. Mg(2+) is required as a cofactor.

It is found in the cytoplasm. It carries out the reaction apo-[ACP] + CoA = holo-[ACP] + adenosine 3',5'-bisphosphate + H(+). Functionally, transfers the 4'-phosphopantetheine moiety from coenzyme A to a Ser of acyl-carrier-protein. The chain is Holo-[acyl-carrier-protein] synthase from Streptococcus uberis (strain ATCC BAA-854 / 0140J).